Consider the following 910-residue polypeptide: Epithelial discoidin domain-containing receptor 1 (910 aa).

An N-terminal signal peptide occupies residues 1 to 19 (MGTGTLSSLLLLLLLVTIG). Residues 22–414 (DMKGHFDPAK…VAKAEGSPTA (393 aa)) are Extracellular-facing. An F5/8 type C domain is found at 32–186 (CRYALGMQDR…VCLRVELYGC (155 aa)). Intrachain disulfides connect Cys32–Cys186 and Cys75–Cys178. Residues 193-368 (LSYTAPVGQT…LFSEISFISD (176 aa)) are DS-like domain. Ca(2+) is bound by residues Asn212, Gln231, Asp234, Val236, Tyr254, and Tyr256. Asn212 carries N-linked (GlcNAc...) asparagine glycosylation. Residue Asn261 is glycosylated (N-linked (GlcNAc...) asparagine). The cysteines at positions 304 and 349 are disulfide-linked. Ca(2+) is bound by residues Ser361 and Glu362. N-linked (GlcNAc...) asparagine glycosylation is found at Asn371 and Asn391. A helical membrane pass occupies residues 415-435 (ILIGCLVAIILLLLLIIALML). Residues 436 to 910 (WRLHWRRLLS…FLADDALNTV (475 aa)) lie on the Cytoplasmic side of the membrane. Residues 467 to 494 (ILINNRPGPREPPPYQEPRPRGTPTHSA) are disordered. A PPxY motif motif is present at residues 478-481 (PPPY). Tyr481, Tyr510, and Tyr517 each carry phosphotyrosine; by autocatalysis. The region spanning 607-902 (LRFKEKLGEG…PPFSQLHRFL (296 aa)) is the Protein kinase domain. Residues 613 to 621 (LGEGQFGEV) and Lys652 contribute to the ATP site. A Phosphotyrosine; by autocatalysis modification is found at Tyr737. Asp763 serves as the catalytic Proton acceptor. A phosphotyrosine; by autocatalysis mark is found at Tyr789, Tyr793, and Tyr794.

Belongs to the protein kinase superfamily. Tyr protein kinase family. Insulin receptor subfamily. As to quaternary structure, homodimer. Interacts (via PPxY motif) with WWC1 (via WW domains) in a collagen-regulated manner. Forms a tripartite complex with WWC1 and PRKCZ, but predominantly in the absence of collagen. Interacts (tyrosine phosphorylated) with SHC1. Interacts with SRC. Interacts with MYH9. Interacts with CDH1. Interacts with PTPN11. Interacts with NCK2. Post-translationally, autophosphorylated in response to fibrillar collagen binding. As to expression, various embryonic and adult tissues; also proliferative zones of the developing brain; hippocampal neurons.

The protein localises to the cell membrane. It catalyses the reaction L-tyrosyl-[protein] + ATP = O-phospho-L-tyrosyl-[protein] + ADP + H(+). Tyrosine kinase that functions as a cell surface receptor for fibrillar collagen and regulates cell attachment to the extracellular matrix, remodeling of the extracellular matrix, cell migration, differentiation, survival and cell proliferation. Collagen binding triggers a signaling pathway that involves SRC and leads to the activation of MAP kinases. Regulates remodeling of the extracellular matrix by up-regulation of the matrix metalloproteinases MMP2, MMP7 and MMP9, and thereby facilitates cell migration and wound healing. Promotes smooth muscle cell migration, and thereby contributes to arterial wound healing. Also plays a role in tumor cell invasion. Phosphorylates PTPN11. Required for normal blastocyst implantation during pregnancy, for normal mammary gland differentiation and normal lactation. Required for normal ear morphology and normal hearing. This is Epithelial discoidin domain-containing receptor 1 (Ddr1) from Rattus norvegicus (Rat).